A 276-amino-acid polypeptide reads, in one-letter code: Small ribosomal subunit protein uS2 (276 aa).

This sequence belongs to the universal ribosomal protein uS2 family.

In Chlamydia caviae (strain ATCC VR-813 / DSM 19441 / 03DC25 / GPIC) (Chlamydophila caviae), this protein is Small ribosomal subunit protein uS2.